A 98-amino-acid chain; its full sequence is NADH-ubiquinone oxidoreductase chain 4L (98 aa).

The next 3 helical transmembrane spans lie at 1–21, 28–48, and 59–79; these read MMSI…GVLI, STLL…ALLI, and APLV…ALLV.

This sequence belongs to the complex I subunit 4L family. Core subunit of respiratory chain NADH dehydrogenase (Complex I) which is composed of 45 different subunits.

It localises to the mitochondrion inner membrane. The enzyme catalyses a ubiquinone + NADH + 5 H(+)(in) = a ubiquinol + NAD(+) + 4 H(+)(out). Functionally, core subunit of the mitochondrial membrane respiratory chain NADH dehydrogenase (Complex I) which catalyzes electron transfer from NADH through the respiratory chain, using ubiquinone as an electron acceptor. Part of the enzyme membrane arm which is embedded in the lipid bilayer and involved in proton translocation. The protein is NADH-ubiquinone oxidoreductase chain 4L (MT-ND4L) of Pseudocheirus peregrinus (Common ring-tailed possum).